Reading from the N-terminus, the 471-residue chain is ATP synthase subunit beta (471 aa).

ATP is bound at residue 156 to 163 (GGAGVGKT).

This sequence belongs to the ATPase alpha/beta chains family. As to quaternary structure, F-type ATPases have 2 components, CF(1) - the catalytic core - and CF(0) - the membrane proton channel. CF(1) has five subunits: alpha(3), beta(3), gamma(1), delta(1), epsilon(1). CF(0) has three main subunits: a(1), b(2) and c(9-12). The alpha and beta chains form an alternating ring which encloses part of the gamma chain. CF(1) is attached to CF(0) by a central stalk formed by the gamma and epsilon chains, while a peripheral stalk is formed by the delta and b chains.

It is found in the cell membrane. The catalysed reaction is ATP + H2O + 4 H(+)(in) = ADP + phosphate + 5 H(+)(out). Produces ATP from ADP in the presence of a proton gradient across the membrane. The catalytic sites are hosted primarily by the beta subunits. This Lysinibacillus sphaericus (strain C3-41) protein is ATP synthase subunit beta.